Reading from the N-terminus, the 270-residue chain is High choriolytic enzyme 1 (270 aa).

The N-terminal stretch at 1–20 (MNLAPSTCLLLLFLLDIAQA) is a signal peptide. The propeptide at 21–70 (LPVWDEEGHEEGHEEGDGDDFVDITTRILTSNNNTDQLLLEGDLVAPTNR) is activation peptide. N-linked (GlcNAc...) asparagine glycosylation occurs at N53. In terms of domain architecture, Peptidase M12A spans 71–270 (NAMKCWSSSC…TRINVLYNCR (200 aa)). 3 cysteine pairs are disulfide-bonded: C75-C80, C120-C269, and C141-C161. H169 provides a ligand contact to Zn(2+). E170 is an active-site residue. The Zn(2+) site is built by H173 and H179.

Zn(2+) serves as cofactor.

It localises to the zymogen granule. The catalysed reaction is Hydrolysis of the inner layer of fish egg envelope. Also hydrolysis of casein and small molecule substrates such as succinyl-Leu-Leu-Val-Tyr-|-7-(4-methyl)coumarylamide.. In terms of biological role, participates in the breakdown of the egg envelope, which is derived from the egg extracellular matrix, at the time of hatching. Thus allowing the newly hatched fish to swim free. HCE binds tightly to the egg envelope while it exerts the choriolytic swelling action. The protein is High choriolytic enzyme 1 (hcea) of Oryzias latipes (Japanese rice fish).